Reading from the N-terminus, the 366-residue chain is Histidinol-phosphate aminotransferase 2 (366 aa).

K226 carries the N6-(pyridoxal phosphate)lysine modification.

Belongs to the class-II pyridoxal-phosphate-dependent aminotransferase family. Histidinol-phosphate aminotransferase subfamily. Homodimer. It depends on pyridoxal 5'-phosphate as a cofactor.

The catalysed reaction is L-histidinol phosphate + 2-oxoglutarate = 3-(imidazol-4-yl)-2-oxopropyl phosphate + L-glutamate. It participates in amino-acid biosynthesis; L-histidine biosynthesis; L-histidine from 5-phospho-alpha-D-ribose 1-diphosphate: step 7/9. The chain is Histidinol-phosphate aminotransferase 2 from Cupriavidus pinatubonensis (strain JMP 134 / LMG 1197) (Cupriavidus necator (strain JMP 134)).